The primary structure comprises 357 residues: GTPase Obg (357 aa).

The Obg domain maps to M1–L159. Positions A160–H334 constitute an OBG-type G domain. Residues G166–S173, F191–H195, D213–G216, N284–D287, and S315–L317 contribute to the GTP site. Positions 173 and 193 each coordinate Mg(2+).

This sequence belongs to the TRAFAC class OBG-HflX-like GTPase superfamily. OBG GTPase family. As to quaternary structure, monomer. It depends on Mg(2+) as a cofactor.

It is found in the cytoplasm. Its function is as follows. An essential GTPase which binds GTP, GDP and possibly (p)ppGpp with moderate affinity, with high nucleotide exchange rates and a fairly low GTP hydrolysis rate. Plays a role in control of the cell cycle, stress response, ribosome biogenesis and in those bacteria that undergo differentiation, in morphogenesis control. The chain is GTPase Obg from Acidovorax sp. (strain JS42).